Here is a 449-residue protein sequence, read N- to C-terminus: Chromosomal replication initiator protein DnaA (449 aa).

Residues 1-72 form a domain I, interacts with DnaA modulators region; that stretch reads MPNLEELWAY…VEGVYEFAQL (72 aa). Residues 72-109 are domain II; sequence LEVDPVIMTKDELQPAPATDQRPAVEEDDQNLTFKAKT. Residues 110–326 are domain III, AAA+ region; the sequence is HLNPKYTFDR…GALVRVQAFS (217 aa). Residues Gly-154, Gly-156, Lys-157, and Thr-158 each coordinate ATP. The domain IV, binds dsDNA stretch occupies residues 327–449; it reads TMKNEDITTS…ELRNILKNRG (123 aa).

It belongs to the DnaA family. In terms of assembly, oligomerizes as a right-handed, spiral filament on DNA at oriC.

It localises to the cytoplasm. Plays an essential role in the initiation and regulation of chromosomal replication. ATP-DnaA binds to the origin of replication (oriC) to initiate formation of the DNA replication initiation complex once per cell cycle. Binds the DnaA box (a 9 base pair repeat at the origin) and separates the double-stranded (ds)DNA. Forms a right-handed helical filament on oriC DNA; dsDNA binds to the exterior of the filament while single-stranded (ss)DNA is stabiized in the filament's interior. The ATP-DnaA-oriC complex binds and stabilizes one strand of the AT-rich DNA unwinding element (DUE), permitting loading of DNA polymerase. After initiation quickly degrades to an ADP-DnaA complex that is not apt for DNA replication. Binds acidic phospholipids. The polypeptide is Chromosomal replication initiator protein DnaA (Lacticaseibacillus casei (strain BL23) (Lactobacillus casei)).